Consider the following 295-residue polypeptide: Undecaprenyl-diphosphatase (295 aa).

6 helical membrane passes run 39–59, 97–117, 121–141, 198–218, 232–252, and 263–283; these read PGAA…LLYF, WYII…QHAI, LRNL…LWIV, AFLM…VKAI, ATIA…IGFL, and FAIY…CGVL.

Belongs to the UppP family.

Its subcellular location is the cell membrane. The catalysed reaction is di-trans,octa-cis-undecaprenyl diphosphate + H2O = di-trans,octa-cis-undecaprenyl phosphate + phosphate + H(+). In terms of biological role, catalyzes the dephosphorylation of undecaprenyl diphosphate (UPP). Confers resistance to bacitracin. The chain is Undecaprenyl-diphosphatase from Bifidobacterium animalis subsp. lactis (strain AD011).